The following is a 403-amino-acid chain: Acetate kinase (403 aa).

Asn-7 provides a ligand contact to Mg(2+). Residue Lys-14 coordinates ATP. Substrate is bound at residue Arg-90. Residue Asp-147 is the Proton donor/acceptor of the active site. Residues His-207–Gly-211, Asp-283–Arg-285, and Gly-331–Asn-335 contribute to the ATP site. Glu-386 is a Mg(2+) binding site.

The protein belongs to the acetokinase family. As to quaternary structure, homodimer. It depends on Mg(2+) as a cofactor. Mn(2+) serves as cofactor.

It localises to the cytoplasm. The enzyme catalyses acetate + ATP = acetyl phosphate + ADP. Its pathway is metabolic intermediate biosynthesis; acetyl-CoA biosynthesis; acetyl-CoA from acetate: step 1/2. Its function is as follows. Catalyzes the formation of acetyl phosphate from acetate and ATP. Can also catalyze the reverse reaction. This Thermotoga petrophila (strain ATCC BAA-488 / DSM 13995 / JCM 10881 / RKU-1) protein is Acetate kinase.